Consider the following 330-residue polypeptide: Aspartate--ammonia ligase (330 aa).

Belongs to the class-II aminoacyl-tRNA synthetase family. AsnA subfamily.

The protein localises to the cytoplasm. It catalyses the reaction L-aspartate + NH4(+) + ATP = L-asparagine + AMP + diphosphate + H(+). It functions in the pathway amino-acid biosynthesis; L-asparagine biosynthesis; L-asparagine from L-aspartate (ammonia route): step 1/1. In Escherichia coli O8 (strain IAI1), this protein is Aspartate--ammonia ligase.